Consider the following 1220-residue polypeptide: DNA-directed RNA polymerase subunit beta (1220 aa).

This sequence belongs to the RNA polymerase beta chain family. The RNAP catalytic core consists of 2 alpha, 1 beta, 1 beta' and 1 omega subunit. When a sigma factor is associated with the core the holoenzyme is formed, which can initiate transcription.

The catalysed reaction is RNA(n) + a ribonucleoside 5'-triphosphate = RNA(n+1) + diphosphate. DNA-dependent RNA polymerase catalyzes the transcription of DNA into RNA using the four ribonucleoside triphosphates as substrates. This chain is DNA-directed RNA polymerase subunit beta, found in Mesomycoplasma hyopneumoniae (strain J / ATCC 25934 / NCTC 10110) (Mycoplasma hyopneumoniae).